A 364-amino-acid polypeptide reads, in one-letter code: tRNA 2-selenouridine synthase (364 aa).

The Rhodanese domain occupies 14–137 (LIADTPIIDV…LRQTAIQATI (124 aa)). Residue C97 is the S-selanylcysteine intermediate of the active site.

The protein belongs to the SelU family. Monomer.

It carries out the reaction 5-methylaminomethyl-2-thiouridine(34) in tRNA + selenophosphate + (2E)-geranyl diphosphate + H2O + H(+) = 5-methylaminomethyl-2-selenouridine(34) in tRNA + (2E)-thiogeraniol + phosphate + diphosphate. It catalyses the reaction 5-methylaminomethyl-2-thiouridine(34) in tRNA + (2E)-geranyl diphosphate = 5-methylaminomethyl-S-(2E)-geranyl-thiouridine(34) in tRNA + diphosphate. The enzyme catalyses 5-methylaminomethyl-S-(2E)-geranyl-thiouridine(34) in tRNA + selenophosphate + H(+) = 5-methylaminomethyl-2-(Se-phospho)selenouridine(34) in tRNA + (2E)-thiogeraniol. The catalysed reaction is 5-methylaminomethyl-2-(Se-phospho)selenouridine(34) in tRNA + H2O = 5-methylaminomethyl-2-selenouridine(34) in tRNA + phosphate. Functionally, involved in the post-transcriptional modification of the uridine at the wobble position (U34) of tRNA(Lys), tRNA(Glu) and tRNA(Gln). Catalyzes the conversion of 2-thiouridine (S2U-RNA) to 2-selenouridine (Se2U-RNA). Acts in a two-step process involving geranylation of 2-thiouridine (S2U) to S-geranyl-2-thiouridine (geS2U) and subsequent selenation of the latter derivative to 2-selenouridine (Se2U) in the tRNA chain. This chain is tRNA 2-selenouridine synthase, found in Escherichia coli O6:K15:H31 (strain 536 / UPEC).